The chain runs to 1407 residues: DNA-directed RNA polymerase subunit beta' (1407 aa).

Zn(2+) contacts are provided by Cys70, Cys72, Cys85, and Cys88. 3 residues coordinate Mg(2+): Asp460, Asp462, and Asp464. Residues Cys814, Cys888, Cys895, and Cys898 each coordinate Zn(2+).

It belongs to the RNA polymerase beta' chain family. As to quaternary structure, the RNAP catalytic core consists of 2 alpha, 1 beta, 1 beta' and 1 omega subunit. When a sigma factor is associated with the core the holoenzyme is formed, which can initiate transcription. It depends on Mg(2+) as a cofactor. Zn(2+) serves as cofactor.

The catalysed reaction is RNA(n) + a ribonucleoside 5'-triphosphate = RNA(n+1) + diphosphate. In terms of biological role, DNA-dependent RNA polymerase catalyzes the transcription of DNA into RNA using the four ribonucleoside triphosphates as substrates. The protein is DNA-directed RNA polymerase subunit beta' of Cellvibrio japonicus (strain Ueda107) (Pseudomonas fluorescens subsp. cellulosa).